Consider the following 469-residue polypeptide: 3-isopropylmalate dehydratase large subunit (469 aa).

Residues cysteine 349, cysteine 409, and cysteine 412 each contribute to the [4Fe-4S] cluster site. Residues glutamine 424 to glycine 443 form a disordered region.

Belongs to the aconitase/IPM isomerase family. LeuC type 1 subfamily. In terms of assembly, heterodimer of LeuC and LeuD. Requires [4Fe-4S] cluster as cofactor.

The catalysed reaction is (2R,3S)-3-isopropylmalate = (2S)-2-isopropylmalate. Its pathway is amino-acid biosynthesis; L-leucine biosynthesis; L-leucine from 3-methyl-2-oxobutanoate: step 2/4. In terms of biological role, catalyzes the isomerization between 2-isopropylmalate and 3-isopropylmalate, via the formation of 2-isopropylmaleate. The chain is 3-isopropylmalate dehydratase large subunit from Thermosynechococcus vestitus (strain NIES-2133 / IAM M-273 / BP-1).